Consider the following 264-residue polypeptide: Flagellar brake protein YcgR 1 (264 aa).

One can recognise a PilZ domain in the interval 132-249; that stretch reads QRREFFRLES…RLAMIERYIA (118 aa).

The protein belongs to the YcgR family. As to quaternary structure, monomer. Interacts with the flagellar basal bodies.

Its subcellular location is the bacterial flagellum basal body. Functionally, acts as a flagellar brake, regulating swimming and swarming in a bis-(3'-5') cyclic diguanylic acid (c-di-GMP)-dependent manner. Binds 1 c-di-GMP dimer per subunit. Increasing levels of c-di-GMP lead to decreased motility. The protein is Flagellar brake protein YcgR 1 of Dechloromonas aromatica (strain RCB).